We begin with the raw amino-acid sequence, 300 residues long: Probable L-serine dehydratase, alpha chain (300 aa).

This sequence belongs to the iron-sulfur dependent L-serine dehydratase family. Heterodimer of an alpha chain and a beta chain. The cofactor is [4Fe-4S] cluster.

The enzyme catalyses L-serine = pyruvate + NH4(+). The protein operates within carbohydrate biosynthesis; gluconeogenesis. This is Probable L-serine dehydratase, alpha chain (sdaAA) from Bacillus subtilis (strain 168).